Consider the following 478-residue polypeptide: Serine hydroxymethyltransferase (478 aa).

Residues Leu161 and 165–167 (GHL) each bind (6S)-5,6,7,8-tetrahydrofolate. N6-(pyridoxal phosphate)lysine is present on Lys273. Glu291 lines the (6S)-5,6,7,8-tetrahydrofolate pocket.

The protein belongs to the SHMT family. As to quaternary structure, homodimer. It depends on pyridoxal 5'-phosphate as a cofactor.

The protein localises to the cytoplasm. It catalyses the reaction (6R)-5,10-methylene-5,6,7,8-tetrahydrofolate + glycine + H2O = (6S)-5,6,7,8-tetrahydrofolate + L-serine. It participates in one-carbon metabolism; tetrahydrofolate interconversion. It functions in the pathway amino-acid biosynthesis; glycine biosynthesis; glycine from L-serine: step 1/1. Its function is as follows. Catalyzes the reversible interconversion of serine and glycine with tetrahydrofolate (THF) serving as the one-carbon carrier. This reaction serves as the major source of one-carbon groups required for the biosynthesis of purines, thymidylate, methionine, and other important biomolecules. Also exhibits THF-independent aldolase activity toward beta-hydroxyamino acids, producing glycine and aldehydes, via a retro-aldol mechanism. The polypeptide is Serine hydroxymethyltransferase (Salinispora tropica (strain ATCC BAA-916 / DSM 44818 / JCM 13857 / NBRC 105044 / CNB-440)).